The following is a 311-amino-acid chain: 4-hydroxy-3-methylbut-2-enyl diphosphate reductase (311 aa).

Cys12 provides a ligand contact to [4Fe-4S] cluster. (2E)-4-hydroxy-3-methylbut-2-enyl diphosphate is bound by residues His41 and His74. Dimethylallyl diphosphate contacts are provided by His41 and His74. Positions 41 and 74 each coordinate isopentenyl diphosphate. Cys96 provides a ligand contact to [4Fe-4S] cluster. His124 serves as a coordination point for (2E)-4-hydroxy-3-methylbut-2-enyl diphosphate. A dimethylallyl diphosphate-binding site is contributed by His124. Residue His124 participates in isopentenyl diphosphate binding. Glu126 (proton donor) is an active-site residue. Thr167 is a binding site for (2E)-4-hydroxy-3-methylbut-2-enyl diphosphate. Cys197 lines the [4Fe-4S] cluster pocket. Ser225, Ser226, Asn227, and Ser269 together coordinate (2E)-4-hydroxy-3-methylbut-2-enyl diphosphate. Dimethylallyl diphosphate-binding residues include Ser225, Ser226, Asn227, and Ser269. The isopentenyl diphosphate site is built by Ser225, Ser226, Asn227, and Ser269.

This sequence belongs to the IspH family. Requires [4Fe-4S] cluster as cofactor.

It catalyses the reaction isopentenyl diphosphate + 2 oxidized [2Fe-2S]-[ferredoxin] + H2O = (2E)-4-hydroxy-3-methylbut-2-enyl diphosphate + 2 reduced [2Fe-2S]-[ferredoxin] + 2 H(+). The enzyme catalyses dimethylallyl diphosphate + 2 oxidized [2Fe-2S]-[ferredoxin] + H2O = (2E)-4-hydroxy-3-methylbut-2-enyl diphosphate + 2 reduced [2Fe-2S]-[ferredoxin] + 2 H(+). It functions in the pathway isoprenoid biosynthesis; dimethylallyl diphosphate biosynthesis; dimethylallyl diphosphate from (2E)-4-hydroxy-3-methylbutenyl diphosphate: step 1/1. Its pathway is isoprenoid biosynthesis; isopentenyl diphosphate biosynthesis via DXP pathway; isopentenyl diphosphate from 1-deoxy-D-xylulose 5-phosphate: step 6/6. In terms of biological role, catalyzes the conversion of 1-hydroxy-2-methyl-2-(E)-butenyl 4-diphosphate (HMBPP) into a mixture of isopentenyl diphosphate (IPP) and dimethylallyl diphosphate (DMAPP). Acts in the terminal step of the DOXP/MEP pathway for isoprenoid precursor biosynthesis. The sequence is that of 4-hydroxy-3-methylbut-2-enyl diphosphate reductase from Aeromonas hydrophila subsp. hydrophila (strain ATCC 7966 / DSM 30187 / BCRC 13018 / CCUG 14551 / JCM 1027 / KCTC 2358 / NCIMB 9240 / NCTC 8049).